Reading from the N-terminus, the 556-residue chain is Urocanate hydratase (556 aa).

NAD(+)-binding positions include 52 to 53 (GG), glutamine 130, 176 to 178 (GMG), glutamate 196, arginine 201, 243 to 244 (NA), 264 to 268 (QTSAH), 274 to 275 (YL), and tyrosine 323. Cysteine 411 is an active-site residue. NAD(+) is bound at residue glycine 493.

This sequence belongs to the urocanase family. NAD(+) serves as cofactor.

It is found in the cytoplasm. It carries out the reaction 4-imidazolone-5-propanoate = trans-urocanate + H2O. The protein operates within amino-acid degradation; L-histidine degradation into L-glutamate; N-formimidoyl-L-glutamate from L-histidine: step 2/3. Functionally, catalyzes the conversion of urocanate to 4-imidazolone-5-propionate. This chain is Urocanate hydratase, found in Rhodospirillum rubrum (strain ATCC 11170 / ATH 1.1.1 / DSM 467 / LMG 4362 / NCIMB 8255 / S1).